The chain runs to 236 residues: Cytochrome c biogenesis ATP-binding export protein CcmA (236 aa).

Residues 14–235 (LEATGLQVAR…SAGDRVTGTE (222 aa)) form the ABC transporter domain. 46-53 (GANGSGKT) contacts ATP.

This sequence belongs to the ABC transporter superfamily. CcmA exporter (TC 3.A.1.107) family. In terms of assembly, the complex is composed of two ATP-binding proteins (CcmA) and two transmembrane proteins (CcmB).

Its subcellular location is the cell inner membrane. It carries out the reaction heme b(in) + ATP + H2O = heme b(out) + ADP + phosphate + H(+). Functionally, part of the ABC transporter complex CcmAB involved in the biogenesis of c-type cytochromes; once thought to export heme, this seems not to be the case, but its exact role is uncertain. Responsible for energy coupling to the transport system. The polypeptide is Cytochrome c biogenesis ATP-binding export protein CcmA (Alkalilimnicola ehrlichii (strain ATCC BAA-1101 / DSM 17681 / MLHE-1)).